The sequence spans 537 residues: DELLA protein GAI (537 aa).

A disordered region spans residues methionine 1–glycine 33. A compositionally biased stretch (low complexity) spans serine 9–serine 20. The short motif at aspartate 37–alanine 41 is the DELLA motif element. Residues lysine 131–arginine 157 form a disordered region. Residues serine 147–threonine 156 are compositionally biased toward low complexity. Residues isoleucine 162 to alanine 533 form the GRAS domain. Positions valine 169–isoleucine 223 are leucine repeat I (LRI). A VHIID region spans residues glutamine 241–glycine 306. The short motif at valine 272–aspartate 276 is the VHIID element. The tract at residues glutamine 320–glutamate 352 is leucine repeat II (LRII). The PFYRE stretch occupies residues valine 364–asparagine 454. Residues leucine 372–leucine 376 carry the LXXLL motif motif. Residues alanine 457–alanine 533 are SAW.

The protein belongs to the GRAS family. DELLA subfamily. Phosphorylated. In terms of processing, ubiquitinated. Upon GA application it is ubiquitinated, leading to its subsequent degradation.

It is found in the nucleus. Probable transcriptional regulator that acts as a repressor of the gibberellin (GA) signaling pathway. Probably acts by participating in large multiprotein complexes that represses transcription of GA-inducible genes. Upon GA application, it is degraded by the proteasome, allowing the GA signaling pathway. The protein is DELLA protein GAI (GAI) of Gossypium hirsutum (Upland cotton).